Here is a 514-residue protein sequence, read N- to C-terminus: MVKMGEVWTNTGSALASLVFIYTIFERFFPYRLREHFEPLAQSLIGFIYPYIQITFHEYSGERFKRSDVYDAIQSYLSKDSSSRAKKLTANTIKGNKSIILSMDDHEEITDEFQGVKVWWQSKKHQSESRAISFYPKADESRFYMLKFHRRDREVITKKYLNHVISEGKTIEVKNRERKLYSNNPSQNWSGYKQTKWSHVTFEHPATFDTLAMEYKKKEEIKNDLIKFSNSKDYYKKIGKAWKRGYLLFGPPGTGKSTMIAAMANLLEYDVYDLELTTVKDNTELRRLLIETSGKSIIVIEDIDCSLDLTGQRKQKKDEEEDEDETSPIEKQMKKDQGENKGSKVTLSGLLNFIDGLWSACGGERIIVFTTNFIDKLDPALIRKGRMDKHIEMSYCGFEAFKVLANNYLDAKEEDDNELFDEIKRLLEVEEIKMTPADVGENLLKKSEVETKEICLKRLIEALKEEKEEAKRRIEDEEKKKKEEEEIKRKKREEKKIKKEEKEEKEENETTMKD.

A helical membrane pass occupies residues 7-24; it reads VWTNTGSALASLVFIYTI. 250–257 is a binding site for ATP; sequence GPPGTGKS. Disordered stretches follow at residues 311–342 and 467–514; these read GQRKQKKDEEEDEDETSPIEKQMKKDQGENKG and KEEA…TMKD. Basic and acidic residues-rich tracts occupy residues 331-342 and 467-502; these read KQMKKDQGENKG and KEEAKRRIEDEEKKKKEEEEIKRKKREEKKIKKEEK.

It belongs to the AAA ATPase family. BCS1 subfamily. The cofactor is Mg(2+). In terms of tissue distribution, expressed in seeds, specifically in the embryo.

The protein localises to the mitochondrion membrane. It catalyses the reaction ATP + H2O = ADP + phosphate + H(+). Its function is as follows. Required to regulate morphology and anatomy during seed maturation. In Arabidopsis thaliana (Mouse-ear cress), this protein is AAA-ATPase ASD, mitochondrial (AATP1).